Reading from the N-terminus, the 688-residue chain is MNENKGNFANKKMIKRAIKDSFIKLSPKTQMENPVMFLVYISSILTTILYAVSLVGIRDSKSSFILGITIILWLTVLFANFAEAIAEGRGKAQADSLRAAKKDVEAHKIPSIEKRDEITKVSSALLKKGDIVIVVAGEQVPADGEVIDGAASVDESAITGESAPVIRESGGDRSAVTGGTTVISDWLIIEVTSEAGESFLDKMISMVEGAARKKTPNEIALQILLISLTIIFLLVTVSLYSYSIFSANQAGVVNPISVTSLVALLVCLAPTTIGALLSSIGIAGMSRLNQANVLAMSGRAIEAAGDVDILMLDKTGTITLGNREACEFIPVNGVNENELADAAQLSSLADETPEGRSIVVLAKEKFGIRGRNIRESNMEFIPFTAKTRMSGVNYNNSEIRKGAAETVKDYVISRGGCYSKECDEVVARISNKGGTPLVVAKDNKVLGVVYLKDIIKQGVQEKFADLRKMGIKTIMITGDNPLTAAAIAAEAGVDDFLAEATPEGKLEMIRDFQIKGHLVAMTGDGTNDAPALAQADVAVAMNTGTQAAKEAGNMVDLDSSPTKLIDIVRIGKQLLMTRGSLTTFSIANDLAKYFAIIPALFIGLYPGLSALNIMNLHSAESAIFSAIIYNALIIVALIPLALKGVKYREVSAGKLLSRNLLVYGLGGIIVPFIAIKVIDVLITAIGIV.

4 consecutive transmembrane segments (helical) span residues 37–57, 65–85, 219–239, and 262–282; these read FLVYISSILTTILYAVSLVGI, ILGITIILWLTVLFANFAEAI, IALQILLISLTIIFLLVTVSL, and VALLVCLAPTTIGALLSSIGI. The 4-aspartylphosphate intermediate role is filled by Asp-313. Residues Asp-350, Glu-354, 383-390, and Lys-401 contribute to the ATP site; that span reads FTAKTRMS. The Mg(2+) site is built by Asp-524 and Asp-528. 3 helical membrane passes run 594–614, 622–642, and 668–688; these read FAIIPALFIGLYPGLSALNIM, AIFSAIIYNALIIVALIPLAL, and IIVPFIAIKVIDVLITAIGIV.

This sequence belongs to the cation transport ATPase (P-type) (TC 3.A.3) family. Type IA subfamily. The system is composed of three essential subunits: KdpA, KdpB and KdpC.

The protein localises to the cell membrane. It catalyses the reaction K(+)(out) + ATP + H2O = K(+)(in) + ADP + phosphate + H(+). Its function is as follows. Part of the high-affinity ATP-driven potassium transport (or Kdp) system, which catalyzes the hydrolysis of ATP coupled with the electrogenic transport of potassium into the cytoplasm. This subunit is responsible for energy coupling to the transport system and for the release of the potassium ions to the cytoplasm. This Clostridium botulinum (strain Alaska E43 / Type E3) protein is Potassium-transporting ATPase ATP-binding subunit.